Here is a 217-residue protein sequence, read N- to C-terminus: UPF0502 protein ASA_1460 (217 aa).

The protein belongs to the UPF0502 family.

This is UPF0502 protein ASA_1460 from Aeromonas salmonicida (strain A449).